We begin with the raw amino-acid sequence, 272 residues long: Tryptophan synthase alpha chain (272 aa).

Residues glutamate 49 and aspartate 60 each act as proton acceptor in the active site.

The protein belongs to the TrpA family. As to quaternary structure, tetramer of two alpha and two beta chains.

It catalyses the reaction (1S,2R)-1-C-(indol-3-yl)glycerol 3-phosphate + L-serine = D-glyceraldehyde 3-phosphate + L-tryptophan + H2O. The protein operates within amino-acid biosynthesis; L-tryptophan biosynthesis; L-tryptophan from chorismate: step 5/5. The alpha subunit is responsible for the aldol cleavage of indoleglycerol phosphate to indole and glyceraldehyde 3-phosphate. This Polaromonas sp. (strain JS666 / ATCC BAA-500) protein is Tryptophan synthase alpha chain.